A 290-amino-acid chain; its full sequence is Ribosomal large subunit pseudouridine synthase B (290 aa).

One can recognise an S4 RNA-binding domain in the interval 3–75 (EKLQKVLARA…ICRVLAYYKP (73 aa)). The active-site Nucleophile is the Asp110. Residues 256–290 (VEKDRRRMKANQIRRAVKRHSQVSGGRRSGGRNNG) form a disordered region.

Belongs to the pseudouridine synthase RsuA family.

The enzyme catalyses uridine(2605) in 23S rRNA = pseudouridine(2605) in 23S rRNA. In terms of biological role, responsible for synthesis of pseudouridine from uracil-2605 in 23S ribosomal RNA. The chain is Ribosomal large subunit pseudouridine synthase B (rluB) from Escherichia coli O157:H7.